The chain runs to 218 residues: Probable nicotinate-nucleotide adenylyltransferase (218 aa).

The protein belongs to the NadD family.

It catalyses the reaction nicotinate beta-D-ribonucleotide + ATP + H(+) = deamido-NAD(+) + diphosphate. It participates in cofactor biosynthesis; NAD(+) biosynthesis; deamido-NAD(+) from nicotinate D-ribonucleotide: step 1/1. In terms of biological role, catalyzes the reversible adenylation of nicotinate mononucleotide (NaMN) to nicotinic acid adenine dinucleotide (NaAD). In Halorhodospira halophila (strain DSM 244 / SL1) (Ectothiorhodospira halophila (strain DSM 244 / SL1)), this protein is Probable nicotinate-nucleotide adenylyltransferase.